Here is a 117-residue protein sequence, read N- to C-terminus: Ribosome-binding factor A (117 aa).

It belongs to the RbfA family. In terms of assembly, monomer. Binds 30S ribosomal subunits, but not 50S ribosomal subunits or 70S ribosomes.

The protein resides in the cytoplasm. Functionally, one of several proteins that assist in the late maturation steps of the functional core of the 30S ribosomal subunit. Associates with free 30S ribosomal subunits (but not with 30S subunits that are part of 70S ribosomes or polysomes). Required for efficient processing of 16S rRNA. May interact with the 5'-terminal helix region of 16S rRNA. This Streptococcus suis (strain 98HAH33) protein is Ribosome-binding factor A.